The chain runs to 196 residues: Putative NADH dehydrogenase/NAD(P)H nitroreductase Reut_A1586 (196 aa).

Belongs to the nitroreductase family. HadB/RutE subfamily. Requires FMN as cofactor.

The chain is Putative NADH dehydrogenase/NAD(P)H nitroreductase Reut_A1586 from Cupriavidus pinatubonensis (strain JMP 134 / LMG 1197) (Cupriavidus necator (strain JMP 134)).